Here is a 523-residue protein sequence, read N- to C-terminus: Ribonuclease Y (523 aa).

Residues 18–38 (WSLTVALVIGGALGFLVVWAF) form a helical membrane-spanning segment. One can recognise a KH domain in the interval 213-276 (TSTIVSLPNE…EVARGALEAL (64 aa)). Residues 339–432 (VLDHSVETAS…VILADTISAT (94 aa)) enclose the HD domain.

The protein belongs to the RNase Y family.

The protein localises to the cell membrane. Functionally, endoribonuclease that initiates mRNA decay. The polypeptide is Ribonuclease Y (Opitutus terrae (strain DSM 11246 / JCM 15787 / PB90-1)).